The following is a 421-amino-acid chain: UDP-N-acetylglucosamine 1-carboxyvinyltransferase (421 aa).

Phosphoenolpyruvate is bound at residue 22–23 (KN). Arg93 contributes to the UDP-N-acetyl-alpha-D-glucosamine binding site. Cys117 (proton donor) is an active-site residue. Cys117 carries the 2-(S-cysteinyl)pyruvic acid O-phosphothioketal modification. UDP-N-acetyl-alpha-D-glucosamine-binding positions include 122–126 (RPVDL), Asp308, and Ile330.

Belongs to the EPSP synthase family. MurA subfamily.

Its subcellular location is the cytoplasm. It carries out the reaction phosphoenolpyruvate + UDP-N-acetyl-alpha-D-glucosamine = UDP-N-acetyl-3-O-(1-carboxyvinyl)-alpha-D-glucosamine + phosphate. Its pathway is cell wall biogenesis; peptidoglycan biosynthesis. In terms of biological role, cell wall formation. Adds enolpyruvyl to UDP-N-acetylglucosamine. The chain is UDP-N-acetylglucosamine 1-carboxyvinyltransferase from Pseudomonas putida (strain GB-1).